We begin with the raw amino-acid sequence, 32 residues long: MEALVYVFLLIGTLMIIFFAIFFREPPRIAKK.

The chain crosses the membrane as a helical span at residues 3–23 (ALVYVFLLIGTLMIIFFAIFF).

Belongs to the PsbT family. As to quaternary structure, PSII is composed of 1 copy each of membrane proteins PsbA, PsbB, PsbC, PsbD, PsbE, PsbF, PsbH, PsbI, PsbJ, PsbK, PsbL, PsbM, PsbT, PsbY, PsbZ, Psb30/Ycf12, at least 3 peripheral proteins of the oxygen-evolving complex and a large number of cofactors. It forms dimeric complexes.

It is found in the plastid. It localises to the chloroplast thylakoid membrane. Found at the monomer-monomer interface of the photosystem II (PS II) dimer, plays a role in assembly and dimerization of PSII. PSII is a light-driven water plastoquinone oxidoreductase, using light energy to abstract electrons from H(2)O, generating a proton gradient subsequently used for ATP formation. In Cyanidioschyzon merolae (strain NIES-3377 / 10D) (Unicellular red alga), this protein is Photosystem II reaction center protein T.